A 971-amino-acid chain; its full sequence is Translation initiation factor IF-2 (971 aa).

The segment covering 48-63 has biased composition (basic and acidic residues); sequence DHLRKSHGATDGDKRK. Disordered stretches follow at residues 48–86 and 101–381; these read DHLR…ARTI and DVAE…STFQ. Low complexity predominate over residues 105 to 114; sequence GADQGQAQVA. Over residues 121–181 the composition is skewed to basic and acidic residues; the sequence is ELKRREEEAR…EEEAATKRAA (61 aa). Residues 182 to 203 are compositionally biased toward low complexity; the sequence is AEAAAAQQQAAAQQAAAEQEAT. Positions 210–261 are enriched in basic and acidic residues; sequence DEARAAAERAAQREAAKKAEDAAREAADKARAEQEEISKRRAAAEAEARAIR. Over residues 277 to 286 the composition is skewed to pro residues; the sequence is PPKPVEPPKP. Positions 304–326 are enriched in low complexity; sequence ARPAVKKPAGAAAPATTQAPAGA. A compositionally biased stretch (gly residues) spans 356 to 369; the sequence is SSGGVDRGWRGGPK. A tr-type G domain is found at 471–640; sequence PRPPVVTVMG…LLQAEVLELK (170 aa). The tract at residues 480 to 487 is G1; that stretch reads GHVDHGKT. 480-487 contributes to the GTP binding site; the sequence is GHVDHGKT. Residues 505 to 509 are G2; the sequence is GITQH. A G3 region spans residues 526 to 529; sequence DTPG. Residues 526–530 and 580–583 contribute to the GTP site; these read DTPGH and NKID. Positions 580–583 are G4; it reads NKID. The tract at residues 616–618 is G5; the sequence is SAK.

The protein belongs to the TRAFAC class translation factor GTPase superfamily. Classic translation factor GTPase family. IF-2 subfamily.

Its subcellular location is the cytoplasm. One of the essential components for the initiation of protein synthesis. Protects formylmethionyl-tRNA from spontaneous hydrolysis and promotes its binding to the 30S ribosomal subunits. Also involved in the hydrolysis of GTP during the formation of the 70S ribosomal complex. This chain is Translation initiation factor IF-2, found in Burkholderia orbicola (strain MC0-3).